A 268-amino-acid chain; its full sequence is Undecaprenyl-diphosphatase (268 aa).

7 helical membrane passes run 47 to 67 (FAVL…FSKL), 85 to 105 (IGVL…GGLI), 109 to 129 (LFNP…LLWV), 144 to 164 (FPLP…FPGV), 184 to 204 (AAEF…VYDL), 217 to 237 (LIVA…VKTF), and 246 to 266 (FALF…ALAL).

Belongs to the UppP family.

It localises to the cell inner membrane. The catalysed reaction is di-trans,octa-cis-undecaprenyl diphosphate + H2O = di-trans,octa-cis-undecaprenyl phosphate + phosphate + H(+). Its function is as follows. Catalyzes the dephosphorylation of undecaprenyl diphosphate (UPP). Confers resistance to bacitracin. This Rhodopseudomonas palustris (strain BisA53) protein is Undecaprenyl-diphosphatase.